The sequence spans 434 residues: MDSVEKGAATSVSNPRGRPSRGRPPKLQRNSRGGQGRGVEKPPHMAALILARGGSKGIPLKNIKHLAGVPLIGWVLRAALDSGVFQSIWVSTDHDEIENVAKQFGAQVHRRSSEASKDSSTSLDAIIEFLNYHNEVDIVGNIQATSPCLHPTDLQKVAEMIREEGYDSVFSVVRRHQFRWGEIQKGVREMTEPLNLNPAKRPRRQDWDGELYENGSFYFAKRHLIEMGYLQGGKMAYYEMRAEHSVDIDVDIDWPIAEQRVLRYGYFGKEKLKEIKLFVCNIDGCLTNGHIYVSGDQKEIISYDVKDAIGISLLKKSGIEVRLISERACSKQTLSSLKLDCKMEVNVPDKLAVVDEWRKEMGLCWKEVAYLGNEVSDEECLKKVGLSGVPADACAAAQKAVGYICKSSGGRGALREFAEHIFLLMEKVINSCQK.

N-acetylmethionine is present on methionine 1. Residues 1–42 (MDSVEKGAATSVSNPRGRPSRGRPPKLQRNSRGGQGRGVEKP) are disordered. Positions 15 to 31 (PRGRPSRGRPPKLQRNS) match the BC1 motif motif. Omega-N-methylarginine occurs at positions 37 and 52. Positions 52, 62, 111, 120, 122, and 143 each coordinate substrate. Residues 200 to 206 (KRPRRQD) carry the BC2 motif motif. Residue arginine 201 is part of the active site. The BC3 motif motif lies at 269–276 (KEKLKEIK).

Belongs to the CMP-NeuNAc synthase family. Homotetramer; the active enzyme is formed by a dimer of dimers.

It localises to the nucleus. It catalyses the reaction an N-acylneuraminate + CTP = a CMP-N-acyl-beta-neuraminate + diphosphate. It participates in amino-sugar metabolism; N-acetylneuraminate metabolism. Its function is as follows. Catalyzes the activation of N-acetylneuraminic acid (NeuNAc) to cytidine 5'-monophosphate N-acetylneuraminic acid (CMP-NeuNAc), a substrate required for the addition of sialic acid. Has some activity toward NeuNAc, N-glycolylneuraminic acid (Neu5Gc) or 2-keto-3-deoxy-D-glycero-D-galacto-nononic acid (KDN). This chain is N-acylneuraminate cytidylyltransferase (CMAS), found in Bos taurus (Bovine).